Consider the following 280-residue polypeptide: MQPALAPHPSAQDHADQVLHDQLLAAQHQHLTHPQQARPQPPAPQPPHMQPNTPARDQNNIDPAISGATMLTGPPQTPTQPDVTGQETPKTYGKRPLSTSKRAAQNRAAQRAFRQRKEAHIRELEGKVKAYENMGEAIKALQAENYQLREYIINLQSRLLDSQGEVPELPGNIDLSQPRSEIPVPPIPNSGTTTTAAPPPTAPQQPQPPHAQAPTSNDDMNSLNRIAVAGLGMRKPPTEEANYLGNNFQAQARRVRPDEGQTEASELPKQEQTHGLPLIS.

Residues 1-102 (MQPALAPHPS…GKRPLSTSKR (102 aa)) are disordered. A compositionally biased stretch (pro residues) spans 39 to 49 (PQPPAPQPPHM). The span at 79–89 (TQPDVTGQETP) shows a compositional bias: polar residues. Residues 96–159 (PLSTSKRAAQ…EYIINLQSRL (64 aa)) form the bZIP domain. The tract at residues 97 to 120 (LSTSKRAAQNRAAQRAFRQRKEAH) is basic motif. The interval 124-155 (LEGKVKAYENMGEAIKALQAENYQLREYIINL) is leucine-zipper. The interval 169-280 (LPGNIDLSQP…EQTHGLPLIS (112 aa)) is disordered. Positions 197–211 (APPPTAPQQPQPPHA) are enriched in pro residues.

Belongs to the bZIP family.

The protein localises to the nucleus. Functionally, putative transcription factor. The protein is Putative transcription factor kapC (kapC) of Neosartorya fischeri (strain ATCC 1020 / DSM 3700 / CBS 544.65 / FGSC A1164 / JCM 1740 / NRRL 181 / WB 181) (Aspergillus fischerianus).